Consider the following 997-residue polypeptide: Translation initiation factor IF-2 (997 aa).

Positions 101–409 are disordered; that stretch reads ELAAEQAAAR…QHQDRRHEQV (309 aa). Composition is skewed to low complexity over residues 116 to 185, 195 to 208, and 244 to 280; these read AEAV…QAEP, AAPA…VEPA, and PSAP…PAAP. Positions 281–292 are enriched in basic and acidic residues; the sequence is DRAREEARRAAE. Over residues 385–394 the composition is skewed to gly residues; the sequence is RAGGKGGRGG. The span at 400-409 shows a compositional bias: basic and acidic residues; the sequence is QHQDRRHEQV. The tr-type G domain occupies 498 to 665; that stretch reads PRAPVVTVMG…NVLLQAEILE (168 aa). The G1 stretch occupies residues 507 to 514; that stretch reads GHVDHGKT. Position 507–514 (507–514) interacts with GTP; that stretch reads GHVDHGKT. The segment at 532-536 is G2; it reads GITQH. The interval 553-556 is G3; the sequence is DTPG. GTP contacts are provided by residues 553-557 and 607-610; these read DTPGH and NKID. The tract at residues 607–610 is G4; that stretch reads NKID. The G5 stretch occupies residues 643–645; sequence SAK.

The protein belongs to the TRAFAC class translation factor GTPase superfamily. Classic translation factor GTPase family. IF-2 subfamily.

It is found in the cytoplasm. One of the essential components for the initiation of protein synthesis. Protects formylmethionyl-tRNA from spontaneous hydrolysis and promotes its binding to the 30S ribosomal subunits. Also involved in the hydrolysis of GTP during the formation of the 70S ribosomal complex. The chain is Translation initiation factor IF-2 from Bordetella bronchiseptica (strain ATCC BAA-588 / NCTC 13252 / RB50) (Alcaligenes bronchisepticus).